Consider the following 449-residue polypeptide: Chitobiosyldiphosphodolichol beta-mannosyltransferase (449 aa).

Residues 1–7 (MFLEIPR) lie on the Lumenal side of the membrane. The chain crosses the membrane as a helical span at residues 8–28 (WLLALIILYLSIPLVVYYVIP). The short motif at 21-32 (LVVYYVIPYLFY) is the Dolichol recognition element. The Cytoplasmic segment spans residues 29–104 (YLFYGNKSTK…SNLKRKGGGT (76 aa)). An intramembrane region (helical) is located at residues 105–125 (SVIFMVKKVLFQVLSIFKLLW). Residues 126–449 (ELRGSDYILV…RTMRDLKLIH (324 aa)) are Cytoplasmic-facing. The interval 435 to 449 (QSNWERTMRDLKLIH) is required for oligomerization.

This sequence belongs to the glycosyltransferase group 1 family. Glycosyltransferase 33 subfamily. Homodimer. ALG1 forms mannosyltransferases (MT) heteromeric complexes with either ALG2 or ALG11.

The protein resides in the endoplasmic reticulum membrane. It carries out the reaction an N,N'-diacetylchitobiosyl-diphospho-di-trans,poly-cis-dolichol + GDP-alpha-D-mannose = a beta-D-Man-(1-&gt;4)-beta-D-GlcNAc-(1-&gt;4)-alpha-D-GlcNAc-diphospho-di-trans,poly-cis-dolichol + GDP + H(+). Its pathway is protein modification; protein glycosylation. Its function is as follows. Participates in the formation of the lipid-linked precursor oligosaccharide for N-glycosylation. Involved in assembling the dolichol-pyrophosphate-GlcNAc(2)-Man(5) intermediate on the cytoplasmic surface of the ER. The protein is Chitobiosyldiphosphodolichol beta-mannosyltransferase (ALG1) of Saccharomyces cerevisiae (strain ATCC 204508 / S288c) (Baker's yeast).